Consider the following 20-residue polypeptide: Non-specific lipid-transfer protein-like protein (20 aa).

This sequence belongs to the plant LTP family.

This chain is Non-specific lipid-transfer protein-like protein, found in Jatropha curcas (Barbados nut).